Consider the following 144-residue polypeptide: Large ribosomal subunit protein uL15 (144 aa).

Residues Met1 to Glu10 are compositionally biased toward basic and acidic residues. The interval Met1–Gln52 is disordered. Over residues Thr23–Gln35 the composition is skewed to gly residues.

The protein belongs to the universal ribosomal protein uL15 family. In terms of assembly, part of the 50S ribosomal subunit.

In terms of biological role, binds to the 23S rRNA. In Ligilactobacillus salivarius (strain UCC118) (Lactobacillus salivarius), this protein is Large ribosomal subunit protein uL15.